The primary structure comprises 360 residues: Phosphoserine aminotransferase (360 aa).

Arg42 provides a ligand contact to L-glutamate. Pyridoxal 5'-phosphate contacts are provided by residues Ala76–Arg77, Trp102, Thr153, Asp172, and Gln195. Lys196 is subject to N6-(pyridoxal phosphate)lysine. Position 237–238 (Asn237–Thr238) interacts with pyridoxal 5'-phosphate.

The protein belongs to the class-V pyridoxal-phosphate-dependent aminotransferase family. SerC subfamily. Homodimer. Pyridoxal 5'-phosphate is required as a cofactor.

The protein localises to the cytoplasm. It carries out the reaction O-phospho-L-serine + 2-oxoglutarate = 3-phosphooxypyruvate + L-glutamate. The catalysed reaction is 4-(phosphooxy)-L-threonine + 2-oxoglutarate = (R)-3-hydroxy-2-oxo-4-phosphooxybutanoate + L-glutamate. The protein operates within amino-acid biosynthesis; L-serine biosynthesis; L-serine from 3-phospho-D-glycerate: step 2/3. It functions in the pathway cofactor biosynthesis; pyridoxine 5'-phosphate biosynthesis; pyridoxine 5'-phosphate from D-erythrose 4-phosphate: step 3/5. Functionally, catalyzes the reversible conversion of 3-phosphohydroxypyruvate to phosphoserine and of 3-hydroxy-2-oxo-4-phosphonooxybutanoate to phosphohydroxythreonine. The chain is Phosphoserine aminotransferase from Photobacterium profundum (strain SS9).